A 1277-amino-acid polypeptide reads, in one-letter code: Protein FAM83H (1277 aa).

Residues 1 to 12 (MARRSQSSSQGE) are compositionally biased toward polar residues. Disordered stretches follow at residues 1–20 (MARR…PNYL), 67–98 (SLQR…SGTY), 717–756 (FGST…TNPL), 772–805 (SKLE…TGRT), 971–1018 (EQTS…NSAF), 1070–1130 (KAEE…SRLS), 1158–1225 (QKNR…RDIL), and 1247–1266 (KKDE…AGKI). Over residues 724-750 (SVEKAKENPPAEKEKEEGLLSRHDSFR) the composition is skewed to basic and acidic residues. Composition is skewed to polar residues over residues 777 to 805 (HTST…TGRT), 971 to 982 (EQTSSTIQTIGN), 993 to 1015 (SGPT…TRPN), and 1112 to 1130 (KSLS…SRLS). Positions 1204–1215 (SFLSRSRFSRPS) are enriched in low complexity. Over residues 1247–1263 (KKDEQPSHADDNDDKKA) the composition is skewed to basic and acidic residues.

It belongs to the FAM83 family.

It is found in the cytoplasm. Its subcellular location is the cytoskeleton. Functionally, may play a role in keratin cytoskeleton disassembly. The sequence is that of Protein FAM83H from Xenopus tropicalis (Western clawed frog).